The sequence spans 348 residues: uncharacterized protein (348 aa).

This is an uncharacterized protein from Geobacillus kaustophilus (strain HTA426).